A 295-amino-acid chain; its full sequence is WHI2-like protein P4H10.16c (295 aa).

It belongs to the WHI2 family.

It is found in the cytoplasm. Its subcellular location is the nucleus. The protein is WHI2-like protein P4H10.16c of Schizosaccharomyces pombe (strain 972 / ATCC 24843) (Fission yeast).